Here is a 443-residue protein sequence, read N- to C-terminus: Transcriptional adapter 2-alpha (443 aa).

Position 6 is a phosphoserine (Ser-6). The ZZ-type zinc finger occupies 12 to 69 (SDKPPCRGCSSYLMEPYIKCAECGPPPFFLCLQCFTRGFEYKKHQSDHTYEIMTSDFP). The Zn(2+) site is built by Cys-17, Cys-20, Cys-31, Cys-34, Cys-42, Cys-45, His-55, and His-59. In terms of domain architecture, SANT spans 70–122 (VLDPSWTAQEEMALLEAVMDCGFGNWQDVANQMCTKTKEECEKHYMKHFINNP). Residues Lys-132 and Lys-138 each participate in a glycyl lysine isopeptide (Lys-Gly) (interchain with G-Cter in SUMO2) cross-link. Residues 356 to 443 (NSGRRSAPPL…LIREGYITKA (88 aa)) enclose the SWIRM domain. Residues 426–435 (KTRKIYDFLI) mediate DNA binding.

In terms of assembly, interacts with GCN5 and NR3C1. Associated with the P/CAF protein in the PCAF complex. Component of the PCAF complex, at least composed of TADA2L/ADA2, TADA3L/ADA3, TAF5L/PAF65-beta, TAF6L/PAF65-alpha, TAF10/TAFII30, TAF12/TAFII20, TAF9/TAFII31 and TRRAP. Component of the ADA2A-containing complex (ATAC), composed of KAT14, KAT2A, TADA2L, TADA3L, ZZ3, MBIP, WDR5, YEATS2, CCDC101 and DR1. Interacts with CCDC134.

Its subcellular location is the nucleus. It localises to the chromosome. Its function is as follows. Component of the ATAC complex, a complex with histone acetyltransferase activity on histones H3 and H4. Required for the function of some acidic activation domains, which activate transcription from a distant site. Binds double-stranded DNA. Binds dinucleosomes, probably at the linker region between neighboring nucleosomes. Plays a role in chromatin remodeling. May promote TP53/p53 'Lys-321' acetylation, leading to reduced TP53 stability and transcriptional activity. May also promote XRCC6 acetylation thus facilitating cell apoptosis in response to DNA damage. In Rattus norvegicus (Rat), this protein is Transcriptional adapter 2-alpha (Tada2a).